The sequence spans 216 residues: Somatotropin (216 aa).

The first 26 residues, 1-26, serve as a signal peptide directing secretion; that stretch reads MAAGPRTSVLLAFTLLCLPWPQEAGA. Histidine 45 provides a ligand contact to Zn(2+). The cysteines at positions 78 and 189 are disulfide-linked. Position 131 is a phosphoserine (serine 131). Glutamate 198 provides a ligand contact to Zn(2+). A disulfide bond links cysteine 206 and cysteine 214.

Belongs to the somatotropin/prolactin family.

The protein resides in the secreted. In terms of biological role, plays an important role in growth control. Its major role in stimulating body growth is to stimulate the liver and other tissues to secrete IGF1. It stimulates both the differentiation and proliferation of myoblasts. It also stimulates amino acid uptake and protein synthesis in muscle and other tissues. This Camelus dromedarius (Dromedary) protein is Somatotropin (GH1).